The following is a 347-amino-acid chain: Very-long-chain 3-oxoacyl-CoA reductase (347 aa).

The chain crosses the membrane as a helical span at residues 22 to 42; the sequence is LLWSIFGFGVLKATTLILRIM. NADP(+) contacts are provided by Val68, Asp122, Asn149, Tyr223, Lys227, Val256, and Ser258. Tyr223 (proton donor) is an active-site residue. The Lowers pKa of active site Tyr role is filled by Lys227.

Belongs to the short-chain dehydrogenases/reductases (SDR) family.

Its subcellular location is the endoplasmic reticulum membrane. The catalysed reaction is a very-long-chain (3R)-3-hydroxyacyl-CoA + NADP(+) = a very-long-chain 3-oxoacyl-CoA + NADPH + H(+). It functions in the pathway lipid metabolism; fatty acid biosynthesis. Functionally, component of the microsomal membrane bound fatty acid elongation system, which produces the 26-carbon very long-chain fatty acids (VLCFA) from palmitate. Catalyzes the reduction of the 3-ketoacyl-CoA intermediate that is formed in each cycle of fatty acid elongation. VLCFAs serve as precursors for ceramide and sphingolipids. The chain is Very-long-chain 3-oxoacyl-CoA reductase from Vanderwaltozyma polyspora (strain ATCC 22028 / DSM 70294 / BCRC 21397 / CBS 2163 / NBRC 10782 / NRRL Y-8283 / UCD 57-17) (Kluyveromyces polysporus).